The following is a 63-amino-acid chain: 2-hydroxymuconate tautomerase (63 aa).

Pro-2 functions as the Proton acceptor; via imino nitrogen in the catalytic mechanism.

This sequence belongs to the 4-oxalocrotonate tautomerase family. As to quaternary structure, homohexamer.

The enzyme catalyses (2Z,4E)-2-hydroxyhexa-2,4-dienedioate = (3E)-2-oxohex-3-enedioate. It participates in aromatic compound metabolism; salicylate degradation. Catalyzes the ketonization of 2-hydroxymuconate stereoselectively to yield 2-oxo-3-hexenedioate. This is 2-hydroxymuconate tautomerase (nahJ) from Pseudomonas fluorescens.